The following is a 493-amino-acid chain: Cytochrome P450 710A4 (493 aa).

Residues 5–25 (VSLFASLTPYLVSALLLFLLL) form a helical membrane-spanning segment. Position 435 (cysteine 435) interacts with heme.

It belongs to the cytochrome P450 family. Requires heme as cofactor. In terms of tissue distribution, very weak expression in roots and root hairs. Not detected in the root tips.

It localises to the membrane. The catalysed reaction is 5-dehydroepisterol + NADPH + O2 + H(+) = ergosta-5,7,22,24(28)-tetraen-3beta-ol + NADP(+) + 2 H2O. It participates in steroid biosynthesis; sterol biosynthesis. In terms of biological role, required to form the C-22 double bond in the sterol side chain. Possesses C-22 desaturase activity toward beta-sitosterol and produces stigmasterol. This Arabidopsis thaliana (Mouse-ear cress) protein is Cytochrome P450 710A4.